We begin with the raw amino-acid sequence, 321 residues long: Lipoyl synthase (321 aa).

The [4Fe-4S] cluster site is built by cysteine 68, cysteine 73, cysteine 79, cysteine 94, cysteine 98, cysteine 101, and serine 308. A Radical SAM core domain is found at 80–297 (FNHGTATFMI…KAEAIAMGFT (218 aa)).

This sequence belongs to the radical SAM superfamily. Lipoyl synthase family. Requires [4Fe-4S] cluster as cofactor.

Its subcellular location is the cytoplasm. The catalysed reaction is [[Fe-S] cluster scaffold protein carrying a second [4Fe-4S](2+) cluster] + N(6)-octanoyl-L-lysyl-[protein] + 2 oxidized [2Fe-2S]-[ferredoxin] + 2 S-adenosyl-L-methionine + 4 H(+) = [[Fe-S] cluster scaffold protein] + N(6)-[(R)-dihydrolipoyl]-L-lysyl-[protein] + 4 Fe(3+) + 2 hydrogen sulfide + 2 5'-deoxyadenosine + 2 L-methionine + 2 reduced [2Fe-2S]-[ferredoxin]. The protein operates within protein modification; protein lipoylation via endogenous pathway; protein N(6)-(lipoyl)lysine from octanoyl-[acyl-carrier-protein]: step 2/2. Its function is as follows. Catalyzes the radical-mediated insertion of two sulfur atoms into the C-6 and C-8 positions of the octanoyl moiety bound to the lipoyl domains of lipoate-dependent enzymes, thereby converting the octanoylated domains into lipoylated derivatives. The protein is Lipoyl synthase of Pectobacterium carotovorum subsp. carotovorum (strain PC1).